Reading from the N-terminus, the 128-residue chain is Holo-[acyl-carrier-protein] synthase (128 aa).

Mg(2+) is bound by residues Asp10 and Glu59.

It belongs to the P-Pant transferase superfamily. AcpS family. Mg(2+) serves as cofactor.

The protein localises to the cytoplasm. It catalyses the reaction apo-[ACP] + CoA = holo-[ACP] + adenosine 3',5'-bisphosphate + H(+). Transfers the 4'-phosphopantetheine moiety from coenzyme A to a Ser of acyl-carrier-protein. This is Holo-[acyl-carrier-protein] synthase from Syntrophotalea carbinolica (strain DSM 2380 / NBRC 103641 / GraBd1) (Pelobacter carbinolicus).